The chain runs to 1674 residues: Kinesin-like protein KIF21A (1674 aa).

N-acetylmethionine is present on methionine 1. A Kinesin motor domain is found at 9 to 371; sequence SVRVAVRIRP…LKYANRARNI (363 aa). Residue 88–95 participates in ATP binding; the sequence is GQTGAGKT. A coiled-coil region spans residues 365–575; the sequence is ANRARNIKNK…NREERSVAGK (211 aa). Serine 524 is subject to Phosphoserine. Disordered stretches follow at residues 556–641, 779–804, and 841–881; these read KKRL…DEKA, EEQEKARLTESRRNREIAQLKKDQRK, and SDKV…AQQK. Positions 560 to 597 are enriched in basic and acidic residues; the sequence is QKLEESNREERSVAGKEDNTDTDQEKKEEKGVSERENN. Residues 598–637 are compositionally biased toward acidic residues; the sequence is ELEVEESQEVSDHEDEEEEEEEEEDDIDGGESSDESDSES. Positions 851–865 are enriched in polar residues; the sequence is KLSSSDAPAQDTGSS. Coiled coils occupy residues 931 to 1019 and 1053 to 1083; these read TDII…AKEE and LQAAQKEAQIKVLEGRLKQTEITSATQNQLL. Positions 1116–1138 are disordered; the sequence is VEDSTDEDAPLNSPGSEGSTLSS. A compositionally biased stretch (polar residues) spans 1128–1138; that stretch reads SPGSEGSTLSS. The interval 1146-1167 is interaction with KANK1 and KANK2; the sequence is EVKPKNKARRRTTTQMELLYAD. Polar residues-rich tracts occupy residues 1170–1179 and 1196–1205; these read ELASDTSTGD and GMNTETSGTS. The interval 1170-1318 is disordered; it reads ELASDTSTGD…SSLSEVHRSS (149 aa). 4 positions are modified to phosphoserine: serine 1212, serine 1225, serine 1229, and serine 1239. Residues 1245–1262 are compositionally biased toward basic and acidic residues; sequence KAYEKAEKSKAKEQKHSD. Over residues 1288-1297 the composition is skewed to polar residues; it reads NRLTVSQGNT. WD repeat units follow at residues 1345–1382, 1385–1423, 1449–1487, 1490–1532, 1541–1578, 1582–1621, and 1624–1661; these read GHTKAVLCVDSTDDLLFTGSKDRTCKVWNLVTGQEIMS, GHPNNVVSVKYCNYTSLVFTVSTSYIKVWDIRDSAKCIR, SGENQINQIALNPTGTFLYAASGNAVRMWDLKRFQSTGK, GHLG…LGTV, PHYDGIEALTIQGDNLFSGSRDNGIKKWDLTQKDLLQQ, AHKDWVCALGVVPDHPVLLSGCRGGILKVWNMDTFMPVGE, and GHDSPINAICVNSTHIFTAADDRTVRIWKARNLQDGQI. Serine 1662 is modified (phosphoserine). Phosphothreonine is present on threonine 1664. A Phosphoserine modification is found at serine 1673.

Belongs to the TRAFAC class myosin-kinesin ATPase superfamily. Kinesin family. As to quaternary structure, part of a cortical microtubule stabilization complex (CMSC) composed of KANK1, PPFIA1, PPFIBP1, ERC1/ELKS, PHLDB2/LL5beta, CLASPs, KIF21A and possibly additional interactors; within CMSCs KANK1 and PHLDB2/LL5beta seem to be the core components for recruiting microtubule-binding proteins KIF21A and CLASPs, whereas PPFIA1, PPFIBP1 and ERC1/ELKS serve as scaffolds for protein clustering. Interacts (via residues 1146-1167) with KANK1 (via ankyrin repeats 1-5) and KANK2 (via ankyrin repeats 1-5).

The protein localises to the cytoplasm. The protein resides in the cytoskeleton. Its subcellular location is the cell cortex. It is found in the cell projection. It localises to the axon. The protein localises to the dendrite. The protein resides in the growth cone. Processive microtubule plus-end directed motor protein involved in neuronal axon guidance. Is recruited by KANK1 to cortical microtubule stabilizing complexes (CMSCs) at focal adhesions (FAs) rims where it promotes microtubule capture and stability. Controls microtubule polymerization rate at axonal growth cones and suppresses microtubule growth without inducing microtubule disassembly once it reaches the cell cortex. The chain is Kinesin-like protein KIF21A (KIF21A) from Homo sapiens (Human).